Reading from the N-terminus, the 553-residue chain is Adenine deaminase (553 aa).

This sequence belongs to the metallo-dependent hydrolases superfamily. Adenine deaminase family. It depends on Mn(2+) as a cofactor.

It carries out the reaction adenine + H2O + H(+) = hypoxanthine + NH4(+). This Methanosarcina acetivorans (strain ATCC 35395 / DSM 2834 / JCM 12185 / C2A) protein is Adenine deaminase.